The chain runs to 391 residues: Autotransporter heptosyltransferase Aah (391 aa).

ADP-D-glycero-beta-D-manno-heptose-binding residues include threonine 101, leucine 102, and glycine 103. Aspartate 104 (proton acceptor) is an active-site residue. ADP-D-glycero-beta-D-manno-heptose contacts are provided by glutamine 218, threonine 220, lysine 224, arginine 251, leucine 275, glycine 296, and glutamate 320. Fe(3+)-binding residues include cysteine 333, cysteine 336, cysteine 352, and cysteine 364.

It belongs to the glycosyltransferase 9 family. As to quaternary structure, homododecamer composed of 6 homodimers forming a ring. The cofactor is Fe(3+).

Its subcellular location is the cytoplasm. The enzyme catalyses ADP-D-glycero-beta-D-manno-heptose + L-seryl-[protein] = O-(D-glycero-alpha-D-manno-heptosyl)-L-seryl-[protein] + ADP + H(+). It catalyses the reaction ADP-L-glycero-beta-D-manno-heptose + L-seryl-[protein] = O-(L-glycero-alpha-D-manno-heptosyl)-L-seryl-[protein] + ADP + H(+). In terms of biological role, glycosylates autotransporter AIDA-I. Catalyzes the addition of both L, D-heptose and D, D-heptose sugars. Probably by glycosylating AIDA-I, involved in bacteria adhesion to host mammalian cells. The sequence is that of Autotransporter heptosyltransferase Aah from Escherichia coli.